A 179-amino-acid chain; its full sequence is Cell division protein SepF (179 aa).

The disordered stretch occupies residues 18 to 57; it reads EDSTVPYEKGNEPVFTPVNSSQEPDLPMNQPSQSAGAKDS. The segment covering 34–57 has biased composition (polar residues); that stretch reads PVNSSQEPDLPMNQPSQSAGAKDS.

This sequence belongs to the SepF family. In terms of assembly, homodimer. Interacts with FtsZ.

Its subcellular location is the cytoplasm. Cell division protein that is part of the divisome complex and is recruited early to the Z-ring. Probably stimulates Z-ring formation, perhaps through the cross-linking of FtsZ protofilaments. Its function overlaps with FtsA. The protein is Cell division protein SepF of Streptococcus pneumoniae (strain Hungary19A-6).